Consider the following 450-residue polypeptide: MDKLELVNDGLNIIDFIQKNQKEIQKTYGRSSIQQPSIKDQTKAWEDFLQCTSGESEQVEGGMSKDDGDVERRNLEDLSSTSPTDGTIGKRVSNTRDWAEGSDDIQLDPVVTDVVYHDHGGECTGYGFTSSPERGWSDYTSGANNGNVCLVSDAKMLSYAPEIAVSKEDRETDLVHLENKLSTTGLNPTAVPFTLRNLSDPAKDSPVIAEHYYGLGVKEQNVGPQTSRNVNLDSIKLYTSDDEEADQLEFEDEFAGSSSEVIVGISPEDEEPSSVGGKPNESIGRTIEGQSIRDNLQAKDNKSTDVPGAGPKDSAVKEEPPQKRLPMLAEEFECSGSEDPIIRELLKENSLINCQQGKDAQPPYHWSIERSISPDKTEIVNGAVQTADRQRPGTPMPKSRGIPIKKGAQTRNIHLLGRKTCLGRRVVQPGMFEDHPPTKKARVSMRRMSN.

The tract at residues 53 to 92 is disordered; sequence SGESEQVEGGMSKDDGDVERRNLEDLSSTSPTDGTIGKRV. The segment covering 63-76 has biased composition (basic and acidic residues); that stretch reads MSKDDGDVERRNLE. Phosphoserine; by host is present on serine 257. Residues 265–324 form a disordered region; it reads ISPEDEEPSSVGGKPNESIGRTIEGQSIRDNLQAKDNKSTDVPGAGPKDSAVKEEPPQKR. Residue serine 350 is modified to Phosphoserine; by host. Disordered regions lie at residues 384–403 and 429–450; these read VQTA…RGIP and PGMF…RMSN. Basic residues predominate over residues 438–450; that stretch reads TKKARVSMRRMSN. The Nuclear localization signal signature appears at 439-442; sequence KKAR.

Interacts with host STAT1.

Its subcellular location is the host nucleus. Prevent the establishment of cellular antiviral state by blocking the interferon-alpha/beta (IFN-alpha/beta). Interacts with host STAT1 protein in the nucleus, blocking it's phosphorylation by IFN-alpha/beta. Also blocks antiviral state induced by Toll-like receptor 3/TLR3 binding to dsRNA. The sequence is that of Protein W (P/V/C) from Cynopterus brachyotis (Lesser short-nosed fruit bat).